The chain runs to 702 residues: Polyribonucleotide nucleotidyltransferase (702 aa).

2 residues coordinate Mg(2+): aspartate 487 and aspartate 493. The KH domain maps to 554-613; that stretch reads PRLLTIKIHPDKIREVIGKGGSTIQAITKETGTQIDIQDDGTIVIASVNAIAAQAAKARI. The region spanning 623–691 is the S1 motif domain; it reads GRIYEGKVAK…KQGRIRLSMK (69 aa).

The protein belongs to the polyribonucleotide nucleotidyltransferase family. As to quaternary structure, component of the RNA degradosome, which is a multiprotein complex involved in RNA processing and mRNA degradation. Mg(2+) is required as a cofactor.

It is found in the cytoplasm. The catalysed reaction is RNA(n+1) + phosphate = RNA(n) + a ribonucleoside 5'-diphosphate. Functionally, involved in mRNA degradation. Catalyzes the phosphorolysis of single-stranded polyribonucleotides processively in the 3'- to 5'-direction. The polypeptide is Polyribonucleotide nucleotidyltransferase (Stenotrophomonas maltophilia (strain R551-3)).